We begin with the raw amino-acid sequence, 562 residues long: Nucleoprotein (562 aa).

The segment at 53 to 238 (MRRVKRDDSD…ITQEESQINI (186 aa)) is binding site for the cap structure m7GTP. 2 residues coordinate Mn(2+): Asp381 and Glu383. Zn(2+)-binding residues include Glu391, Cys498, His501, and Cys522. Residue Asp526 coordinates Mn(2+).

This sequence belongs to the arenaviridae nucleocapsid protein family. In terms of assembly, homomultimerizes to form the nucleocapsid. Binds to viral genomic RNA. Interacts with glycoprotein G2. Interacts with protein Z; this interaction probably directs the encapsidated genome to budding sites. Interacts with protein L; this interaction does not interfere with Z-L interaction. Interacts with host IKBKE (via Protein kinase domain); the interaction inhibits IKBKE kinase activity.

It localises to the virion. The protein resides in the host cytoplasm. In terms of biological role, encapsidates the genome, protecting it from nucleases. The encapsidated genomic RNA is termed the nucleocapsid (NC). Serves as template for viral transcription and replication. The increased presence of protein N in host cell does not seem to trigger the switch from transcription to replication as observed in other negative strain RNA viruses. Through the interaction with host IKBKE, strongly inhibits the phosphorylation and nuclear translocation of host IRF3, a protein involved in interferon activation pathway, leading to the inhibition of interferon-beta and IRF3-dependent promoters activation. Also encodes a functional 3'-5' exoribonuclease that degrades preferentially dsRNA substrates and thereby participates in the suppression of interferon induction. The protein is Nucleoprotein of Neotoma (wood rats).